Here is a 322-residue protein sequence, read N- to C-terminus: tRNA dimethylallyltransferase (322 aa).

ATP is bound at residue 21–28 (GQTAVGKT). A substrate-binding site is contributed by 23–28 (TAVGKT). Residues 46 to 49 (DSGC) are interaction with substrate tRNA.

It belongs to the IPP transferase family. As to quaternary structure, monomer. It depends on Mg(2+) as a cofactor.

It carries out the reaction adenosine(37) in tRNA + dimethylallyl diphosphate = N(6)-dimethylallyladenosine(37) in tRNA + diphosphate. Catalyzes the transfer of a dimethylallyl group onto the adenine at position 37 in tRNAs that read codons beginning with uridine, leading to the formation of N6-(dimethylallyl)adenosine (i(6)A). In Wigglesworthia glossinidia brevipalpis, this protein is tRNA dimethylallyltransferase.